Consider the following 145-residue polypeptide: Large ribosomal subunit protein uL14m (145 aa).

The transit peptide at 1-30 directs the protein to the mitochondrion; it reads MAVLTGLFGFFAYVRGAVSQRCFSTSGSLS.

This sequence belongs to the universal ribosomal protein uL14 family. Component of the mitochondrial ribosome large subunit (39S) which comprises a 16S rRNA and about 50 distinct proteins. Interacts with MALSU1.

The protein resides in the mitochondrion. May form part of 2 intersubunit bridges in the assembled ribosome. Upon binding to MALSU1, intersubunit bridge formation is blocked, preventing ribosome formation and repressing translation. The polypeptide is Large ribosomal subunit protein uL14m (Mrpl14) (Rattus norvegicus (Rat)).